We begin with the raw amino-acid sequence, 436 residues long: Probable mediator of RNA polymerase II transcription subunit 26b (436 aa).

The segment at 71–111 (PGDDEANRGTTGNGGGGTAVDEDYEVAGGSKESKANSSRGD) is disordered. Residues 139-214 (KEVARIKEIL…AEWKELVDQW (76 aa)) enclose the TFIIS N-terminal domain. Positions 263-376 (HFFDSLDFDG…PQQEKLKGLD (114 aa)) are disordered. 2 stretches are compositionally biased toward basic and acidic residues: residues 276-290 (NSEE…ERRP) and 332-350 (TEQR…EKPM). Residues 382–402 (EFAKRKLQESYQHHENAKKQR) are a coiled coil. The segment at 408–436 (EMIPKQGSAQKPQLKRPGMSNRNWANGRK) is disordered. Residues 427 to 436 (SNRNWANGRK) show a composition bias toward polar residues.

It belongs to the Mediator complex subunit 26 family. In terms of assembly, component of the Mediator complex.

Its subcellular location is the nucleus. Its function is as follows. Component of the Mediator complex, a coactivator involved in the regulated transcription of nearly all RNA polymerase II-dependent genes. Mediator functions as a bridge to convey information from gene-specific regulatory proteins to the basal RNA polymerase II transcription machinery. The Mediator complex, having a compact conformation in its free form, is recruited to promoters by direct interactions with regulatory proteins and serves for the assembly of a functional preinitiation complex with RNA polymerase II and the general transcription factors. May play a role in transcription elongation. The chain is Probable mediator of RNA polymerase II transcription subunit 26b (MED26B) from Arabidopsis thaliana (Mouse-ear cress).